Reading from the N-terminus, the 349-residue chain is 2-oxoglutarate-Fe(II) type oxidoreductase ppzD (349 aa).

Positions 200-311 (NTSELRLNHY…RYSVAYFGKP (112 aa)) constitute a Fe2OG dioxygenase domain. The Fe cation site is built by histidine 227, aspartate 229, and histidine 287. Arginine 302 lines the 2-oxoglutarate pocket.

It belongs to the iron/ascorbate-dependent oxidoreductase family. The cofactor is Fe(2+).

It catalyses the reaction L-proline + 2-oxoglutarate + O2 = trans-4-hydroxy-L-proline + succinate + CO2. The enzyme catalyses L-proline + 2-oxoglutarate + O2 = trans-3-hydroxy-L-proline + succinate + CO2. The catalysed reaction is D-proline + 2-oxoglutarate + O2 = cis-4-hydroxy-D-proline + succinate + CO2. It participates in secondary metabolite biosynthesis. In terms of biological role, 2-oxoglutarate-Fe(II) type oxidoreductase; part of the gene cluster that mediates the biosynthesis of pyrrolopyrazines, secondary metabolites showing insecticidal activity. Within the pathway, ppzD converts L-proline into trans-4-hydroxy-L-proline as a major product, yielding a key precursor for peramine biosynthesis. PpzD is also able to convert L-proline into trans-3-hydroxy-L-proline. The single multifunctional NRPS ppzA is sufficient to produce peramine via condensation of 1-pyrroline-5-carboxylate and arginine, N-methylation of the alpha-amino group of arginine and reduction of the thioester and the cyclization to form an iminium ion resulting in release from the peptide synthetase. Deprotonation of this intermediate and oxidation of the pyrroline ring would give rise to peramine. In Epichloe species that produce only peramine, the peramine synthetase gene is not localized in a gene cluster, in contrast to Metarhizium species that contain additional pyrrolopyrazine biosynthesis genes. The 2-oxoglutarate-Fe(II) type oxidoreductase ppzC hydroxylates peramine to yield the newly identified compound 8-hydroxyperamine whereas ppzD converts L-proline into trans-4-hydroxy-L-proline, a precursor of peramine biosynthesis. This is 2-oxoglutarate-Fe(II) type oxidoreductase ppzD (ppzD) from Metarhizium majus (strain ARSEF 297).